A 430-amino-acid chain; its full sequence is Formate-dependent phosphoribosylglycinamide formyltransferase (430 aa).

N(1)-(5-phospho-beta-D-ribosyl)glycinamide is bound by residues 26–27 (EL) and Glu-86. Residues Arg-118, Lys-159, 199 to 202 (EEHI), and Glu-207 each bind ATP. The ATP-grasp domain maps to 123-319 (ETLVKEAKVP…EFALHLRAVL (197 aa)). Mg(2+) contacts are provided by Glu-276 and Glu-288. N(1)-(5-phospho-beta-D-ribosyl)glycinamide contacts are provided by residues Asp-295, Lys-375, and 382 to 383 (RR).

It belongs to the PurK/PurT family. Homodimer.

The catalysed reaction is N(1)-(5-phospho-beta-D-ribosyl)glycinamide + formate + ATP = N(2)-formyl-N(1)-(5-phospho-beta-D-ribosyl)glycinamide + ADP + phosphate + H(+). Its pathway is purine metabolism; IMP biosynthesis via de novo pathway; N(2)-formyl-N(1)-(5-phospho-D-ribosyl)glycinamide from N(1)-(5-phospho-D-ribosyl)glycinamide (formate route): step 1/1. In terms of biological role, involved in the de novo purine biosynthesis. Catalyzes the transfer of formate to 5-phospho-ribosyl-glycinamide (GAR), producing 5-phospho-ribosyl-N-formylglycinamide (FGAR). Formate is provided by PurU via hydrolysis of 10-formyl-tetrahydrofolate. This is Formate-dependent phosphoribosylglycinamide formyltransferase from Pyrococcus horikoshii (strain ATCC 700860 / DSM 12428 / JCM 9974 / NBRC 100139 / OT-3).